Here is a 59-residue protein sequence, read N- to C-terminus: UPF0434 protein Shewmr7_2490 (59 aa).

This sequence belongs to the UPF0434 family.

In Shewanella sp. (strain MR-7), this protein is UPF0434 protein Shewmr7_2490.